The chain runs to 361 residues: Peptide chain release factor 1 (361 aa).

At Gln-238 the chain carries N5-methylglutamine.

Belongs to the prokaryotic/mitochondrial release factor family. Post-translationally, methylated by PrmC. Methylation increases the termination efficiency of RF1.

It is found in the cytoplasm. In terms of biological role, peptide chain release factor 1 directs the termination of translation in response to the peptide chain termination codons UAG and UAA. The sequence is that of Peptide chain release factor 1 from Mesomycoplasma hyopneumoniae (strain 232) (Mycoplasma hyopneumoniae).